We begin with the raw amino-acid sequence, 108 residues long: Probable 4-amino-4-deoxy-L-arabinose-phosphoundecaprenol flippase subunit ArnE (108 aa).

A run of 3 helical transmembrane segments spans residues 32–52, 58–78, and 85–105; these read PLLL…LVWL, VPVG…TLAA, and TLSL…AIMG. The 73-residue stretch at 34–106 folds into the EamA domain; sequence LLWLGGSVLL…IVAGVAIMGS (73 aa).

Belongs to the ArnE family. As to quaternary structure, heterodimer of ArnE and ArnF.

The protein localises to the cell inner membrane. It participates in bacterial outer membrane biogenesis; lipopolysaccharide biosynthesis. Functionally, translocates 4-amino-4-deoxy-L-arabinose-phosphoundecaprenol (alpha-L-Ara4N-phosphoundecaprenol) from the cytoplasmic to the periplasmic side of the inner membrane. The polypeptide is Probable 4-amino-4-deoxy-L-arabinose-phosphoundecaprenol flippase subunit ArnE (Erwinia tasmaniensis (strain DSM 17950 / CFBP 7177 / CIP 109463 / NCPPB 4357 / Et1/99)).